Here is a 279-residue protein sequence, read N- to C-terminus: Proteasome subunit alpha type-1 (279 aa).

Residue tyrosine 103 is modified to Phosphotyrosine. Residues 235–249 (HVAIAKENDNDTPRN) are compositionally biased toward basic and acidic residues. Residues 235–279 (HVAIAKENDNDTPRNDDDDDRPSPPEEPAAGPRDPEVLVATEQRP) form a disordered region.

The protein belongs to the peptidase T1A family. The 26S proteasome consists of a 20S proteasome core and two 19S regulatory subunits. The 20S proteasome core is composed of 28 subunits that are arranged in four stacked rings, resulting in a barrel-shaped structure. The two end rings are each formed by seven alpha subunits, and the two central rings are each formed by seven beta subunits. The catalytic chamber with the active sites is on the inside of the barrel. Interacts with PI31.

It localises to the cytoplasm. It is found in the nucleus. In terms of biological role, the proteasome is a multicatalytic proteinase complex which is characterized by its ability to cleave peptides with Arg, Phe, Tyr, Leu, and Glu adjacent to the leaving group at neutral or slightly basic pH. The proteasome has an ATP-dependent proteolytic activity. In Drosophila melanogaster (Fruit fly), this protein is Proteasome subunit alpha type-1 (Prosalpha6).